The following is a 149-amino-acid chain: UPF0260 protein PFL_1499 (149 aa).

The protein belongs to the UPF0260 family.

In Pseudomonas fluorescens (strain ATCC BAA-477 / NRRL B-23932 / Pf-5), this protein is UPF0260 protein PFL_1499.